Here is a 247-residue protein sequence, read N- to C-terminus: 3,4-dihydroxy-2-butanone 4-phosphate synthase (247 aa).

Residues 38 to 39, aspartate 43, 179 to 183, and glutamate 203 each bind D-ribulose 5-phosphate; these read RE and RMGQT. Position 39 (glutamate 39) interacts with Mg(2+).

It belongs to the DHBP synthase family. As to quaternary structure, homodimer. Mg(2+) serves as cofactor. Mn(2+) is required as a cofactor.

It carries out the reaction D-ribulose 5-phosphate = (2S)-2-hydroxy-3-oxobutyl phosphate + formate + H(+). It functions in the pathway cofactor biosynthesis; riboflavin biosynthesis; 2-hydroxy-3-oxobutyl phosphate from D-ribulose 5-phosphate: step 1/1. Catalyzes the conversion of D-ribulose 5-phosphate to formate and 3,4-dihydroxy-2-butanone 4-phosphate. In Methanosarcina acetivorans (strain ATCC 35395 / DSM 2834 / JCM 12185 / C2A), this protein is 3,4-dihydroxy-2-butanone 4-phosphate synthase.